The primary structure comprises 375 residues: Alanine racemase, catabolic (375 aa).

Residue K38 is the Proton acceptor; specific for D-alanine of the active site. K38 carries the N6-(pyridoxal phosphate)lysine modification. Y269 acts as the Proton acceptor; specific for L-alanine in catalysis.

This sequence belongs to the alanine racemase family. Requires pyridoxal 5'-phosphate as cofactor.

The enzyme catalyses L-alanine = D-alanine. Its pathway is amino-acid biosynthesis; D-alanine biosynthesis; D-alanine from L-alanine: step 1/1. The protein is Alanine racemase, catabolic (alr1) of Schizosaccharomyces pombe (strain 972 / ATCC 24843) (Fission yeast).